The sequence spans 473 residues: Serine carboxypeptidase-like 25 (473 aa).

The N-terminal stretch at 1–22 is a signal peptide; the sequence is MAMAKLAIFTTLMAILVMTSQG. Residues Asn-46 and Asn-143 are each glycosylated (N-linked (GlcNAc...) asparagine). Intrachain disulfides connect Cys-92-Cys-358, Cys-252-Cys-263, and Cys-288-Cys-326. The active site involves Ser-185. Asn-289, Asn-299, Asn-347, and Asn-367 each carry an N-linked (GlcNAc...) asparagine glycan. Active-site residues include Asp-395 and His-447.

This sequence belongs to the peptidase S10 family. Ubiquitous.

It is found in the secreted. Its function is as follows. Probable carboxypeptidase. The sequence is that of Serine carboxypeptidase-like 25 (SCPL25) from Arabidopsis thaliana (Mouse-ear cress).